The chain runs to 210 residues: Chaperone protein TorD (210 aa).

This sequence belongs to the TorD/DmsD family. TorD subfamily.

It is found in the cytoplasm. Its function is as follows. Involved in the biogenesis of TorA. Acts on TorA before the insertion of the molybdenum cofactor and, as a result, probably favors a conformation of the apoenzyme that is competent for acquiring the cofactor. This is Chaperone protein TorD from Salmonella paratyphi B (strain ATCC BAA-1250 / SPB7).